The primary structure comprises 274 residues: Thiamine kinase (274 aa).

It belongs to the thiamine kinase family.

It catalyses the reaction thiamine + ATP = thiamine phosphate + ADP + H(+). The protein operates within cofactor biosynthesis; thiamine diphosphate biosynthesis; thiamine phosphate from thiamine: step 1/1. In terms of biological role, catalyzes the ATP-dependent phosphorylation of thiamine to thiamine phosphate. Is involved in thiamine salvage. The protein is Thiamine kinase of Escherichia coli O45:K1 (strain S88 / ExPEC).